We begin with the raw amino-acid sequence, 419 residues long: CCA-adding enzyme (419 aa).

ATP contacts are provided by S54 and R57. Positions 54 and 57 each coordinate CTP. Mg(2+) is bound by residues D66, D68, and D118. Positions 141, 161, and 170 each coordinate ATP. H141, K161, and Y170 together coordinate CTP.

This sequence belongs to the tRNA nucleotidyltransferase/poly(A) polymerase family. Archaeal CCA-adding enzyme subfamily. Homodimer. Mg(2+) serves as cofactor.

It carries out the reaction a tRNA precursor + 2 CTP + ATP = a tRNA with a 3' CCA end + 3 diphosphate. The enzyme catalyses a tRNA with a 3' CCA end + 2 CTP + ATP = a tRNA with a 3' CCACCA end + 3 diphosphate. Functionally, catalyzes the addition and repair of the essential 3'-terminal CCA sequence in tRNAs without using a nucleic acid template. Adds these three nucleotides in the order of C, C, and A to the tRNA nucleotide-73, using CTP and ATP as substrates and producing inorganic pyrophosphate. tRNA 3'-terminal CCA addition is required both for tRNA processing and repair. Also involved in tRNA surveillance by mediating tandem CCA addition to generate a CCACCA at the 3' terminus of unstable tRNAs. While stable tRNAs receive only 3'-terminal CCA, unstable tRNAs are marked with CCACCA and rapidly degraded. The protein is CCA-adding enzyme of Pyrobaculum aerophilum (strain ATCC 51768 / DSM 7523 / JCM 9630 / CIP 104966 / NBRC 100827 / IM2).